A 146-amino-acid chain; its full sequence is Putative pre-16S rRNA nuclease (146 aa).

The protein belongs to the YqgF nuclease family.

It is found in the cytoplasm. In terms of biological role, could be a nuclease involved in processing of the 5'-end of pre-16S rRNA. This chain is Putative pre-16S rRNA nuclease, found in Mycoplasmopsis pulmonis (strain UAB CTIP) (Mycoplasma pulmonis).